Reading from the N-terminus, the 130-residue chain is Small ribosomal subunit protein uS8 (130 aa).

This sequence belongs to the universal ribosomal protein uS8 family. As to quaternary structure, part of the 30S ribosomal subunit. Contacts proteins S5 and S12.

Its function is as follows. One of the primary rRNA binding proteins, it binds directly to 16S rRNA central domain where it helps coordinate assembly of the platform of the 30S subunit. The sequence is that of Small ribosomal subunit protein uS8 from Wigglesworthia glossinidia brevipalpis.